Here is a 350-residue protein sequence, read N- to C-terminus: UDP-N-acetylenolpyruvoylglucosamine reductase (350 aa).

Positions 24 to 195 (HVEATARWLL…VAVEFNLPLL (172 aa)) constitute an FAD-binding PCMH-type domain. Residue arginine 172 is part of the active site. Residue serine 245 is the Proton donor of the active site. Glutamate 342 is a catalytic residue.

The protein belongs to the MurB family. The cofactor is FAD.

Its subcellular location is the cytoplasm. It catalyses the reaction UDP-N-acetyl-alpha-D-muramate + NADP(+) = UDP-N-acetyl-3-O-(1-carboxyvinyl)-alpha-D-glucosamine + NADPH + H(+). It participates in cell wall biogenesis; peptidoglycan biosynthesis. Cell wall formation. The chain is UDP-N-acetylenolpyruvoylglucosamine reductase from Xanthomonas euvesicatoria pv. vesicatoria (strain 85-10) (Xanthomonas campestris pv. vesicatoria).